A 252-amino-acid polypeptide reads, in one-letter code: Probable transcriptional regulatory protein Caur_1043 (252 aa).

Residues 1 to 14 (MSGHSKWHTIRRTK) show a composition bias toward basic residues. Residues 1–22 (MSGHSKWHTIRRTKGVNDQRRG) are disordered.

The protein belongs to the TACO1 family.

Its subcellular location is the cytoplasm. In Chloroflexus aurantiacus (strain ATCC 29366 / DSM 635 / J-10-fl), this protein is Probable transcriptional regulatory protein Caur_1043.